The chain runs to 280 residues: 2,3,4,5-tetrahydropyridine-2,6-dicarboxylate N-succinyltransferase (280 aa).

Substrate is bound by residues arginine 107 and aspartate 144.

It belongs to the transferase hexapeptide repeat family. In terms of assembly, homotrimer.

The protein resides in the cytoplasm. It catalyses the reaction (S)-2,3,4,5-tetrahydrodipicolinate + succinyl-CoA + H2O = (S)-2-succinylamino-6-oxoheptanedioate + CoA. It participates in amino-acid biosynthesis; L-lysine biosynthesis via DAP pathway; LL-2,6-diaminopimelate from (S)-tetrahydrodipicolinate (succinylase route): step 1/3. The polypeptide is 2,3,4,5-tetrahydropyridine-2,6-dicarboxylate N-succinyltransferase (Granulibacter bethesdensis (strain ATCC BAA-1260 / CGDNIH1)).